Consider the following 69-residue polypeptide: Large ribosomal subunit protein bL28 (69 aa).

This sequence belongs to the bacterial ribosomal protein bL28 family.

The polypeptide is Large ribosomal subunit protein bL28 (Nitratidesulfovibrio vulgaris (strain ATCC 29579 / DSM 644 / CCUG 34227 / NCIMB 8303 / VKM B-1760 / Hildenborough) (Desulfovibrio vulgaris)).